The chain runs to 134 residues: ATP synthase epsilon chain (134 aa).

It belongs to the ATPase epsilon chain family. In terms of assembly, F-type ATPases have 2 components, CF(1) - the catalytic core - and CF(0) - the membrane proton channel. CF(1) has five subunits: alpha(3), beta(3), gamma(1), delta(1), epsilon(1). CF(0) has three main subunits: a, b and c.

It localises to the cell membrane. Functionally, produces ATP from ADP in the presence of a proton gradient across the membrane. This is ATP synthase epsilon chain from Pelotomaculum thermopropionicum (strain DSM 13744 / JCM 10971 / SI).